The sequence spans 90 residues: Acylphosphatase (90 aa).

The Acylphosphatase-like domain maps to 5-90 (CVKASVKGIV…WRHIDGFEIK (86 aa)). Residues arginine 20 and asparagine 38 contribute to the active site.

Belongs to the acylphosphatase family.

It catalyses the reaction an acyl phosphate + H2O = a carboxylate + phosphate + H(+). The protein is Acylphosphatase (acyP) of Photobacterium profundum (strain SS9).